Here is a 309-residue protein sequence, read N- to C-terminus: Taste receptor type 2 member 124 (309 aa).

The Extracellular portion of the chain corresponds to 1–7 (MVPVLHS). A helical membrane pass occupies residues 8 to 28 (LSTIILIAEFVWGNLSNGLIV). At 29–46 (LKNCIDWINKKELSTVDQ) the chain is on the cytoplasmic side. Residues 47–67 (ILIVLAISRISLIWETLIIWV) form a helical membrane-spanning segment. Topologically, residues 68 to 86 (KDQLISSITIEELKIIVFS) are extracellular. The helical transmembrane segment at 87–107 (FILSSHFSLWLATALSIFYLF) threads the bilayer. Over 108–127 (RIPNCYWQIFLYLKWRIKQL) the chain is Cytoplasmic. Residues 128 to 148 (IVHMLLGSLVFLVANMIQITI) form a helical membrane-spanning segment. At 149–183 (TLEERFYQYGGNTSVNSMETEFSILIELMLFNMTM) the chain is on the extracellular side. 2 N-linked (GlcNAc...) asparagine glycosylation sites follow: Asn160 and Asn180. A helical membrane pass occupies residues 184–204 (FSIIPFSLALISFLLLIFSLW). Residues 205–230 (KHLQKMPLNSRGDRDPSATAHRNALR) are Cytoplasmic-facing. The helical transmembrane segment at 231–251 (ILVSFLLLYTIYFLSLLISWV) threads the bilayer. At 252–261 (AQKNQSELVH) the chain is on the extracellular side. Asn255 is a glycosylation site (N-linked (GlcNAc...) asparagine). The helical transmembrane segment at 262 to 282 (IICMITSLVYPSFHSYILILG) threads the bilayer. At 283 to 309 (NYKLKQTSLWVMRQLGCRMKRQNTPTT) the chain is on the cytoplasmic side.

The protein belongs to the G-protein coupled receptor T2R family.

It localises to the membrane. Functionally, putative taste receptor which may play a role in the perception of bitterness. The polypeptide is Taste receptor type 2 member 124 (Mus musculus (Mouse)).